Reading from the N-terminus, the 1434-residue chain is DNA-directed RNA polymerase subunit beta' (1434 aa).

Residues Cys-70, Cys-72, Cys-85, and Cys-88 each contribute to the Zn(2+) site. Asp-460, Asp-462, and Asp-464 together coordinate Mg(2+). Positions 840, 915, 922, and 925 each coordinate Zn(2+).

Belongs to the RNA polymerase beta' chain family. In terms of assembly, the RNAP catalytic core consists of 2 alpha, 1 beta, 1 beta' and 1 omega subunit. When a sigma factor is associated with the core the holoenzyme is formed, which can initiate transcription. The cofactor is Mg(2+). Zn(2+) is required as a cofactor.

It carries out the reaction RNA(n) + a ribonucleoside 5'-triphosphate = RNA(n+1) + diphosphate. In terms of biological role, DNA-dependent RNA polymerase catalyzes the transcription of DNA into RNA using the four ribonucleoside triphosphates as substrates. This Aeromonas hydrophila subsp. hydrophila (strain ATCC 7966 / DSM 30187 / BCRC 13018 / CCUG 14551 / JCM 1027 / KCTC 2358 / NCIMB 9240 / NCTC 8049) protein is DNA-directed RNA polymerase subunit beta'.